Here is a 279-residue protein sequence, read N- to C-terminus: 3-methyl-2-oxobutanoate hydroxymethyltransferase (279 aa).

Residues Asp43 and Asp82 each coordinate Mg(2+). 3-methyl-2-oxobutanoate is bound by residues Asp43–Ser44, Asp82, and Lys112. Mg(2+) is bound at residue Glu114. Glu181 serves as the catalytic Proton acceptor.

Belongs to the PanB family. In terms of assembly, homodecamer; pentamer of dimers. Mg(2+) is required as a cofactor.

The protein resides in the cytoplasm. The catalysed reaction is 3-methyl-2-oxobutanoate + (6R)-5,10-methylene-5,6,7,8-tetrahydrofolate + H2O = 2-dehydropantoate + (6S)-5,6,7,8-tetrahydrofolate. It functions in the pathway cofactor biosynthesis; (R)-pantothenate biosynthesis; (R)-pantoate from 3-methyl-2-oxobutanoate: step 1/2. Catalyzes the reversible reaction in which hydroxymethyl group from 5,10-methylenetetrahydrofolate is transferred onto alpha-ketoisovalerate to form ketopantoate. The chain is 3-methyl-2-oxobutanoate hydroxymethyltransferase from Bacillus pumilus (strain SAFR-032).